A 229-amino-acid polypeptide reads, in one-letter code: Potassium/proton antiporter CemA (229 aa).

4 helical membrane-spanning segments follow: residues 7–27, 114–134, 154–174, and 189–209; these read FTPL…SLSF, IICF…LVIL, ILLV…ELMI, and IISG…KYWI.

It belongs to the CemA family.

It is found in the plastid. The protein resides in the chloroplast inner membrane. The catalysed reaction is K(+)(in) + H(+)(out) = K(+)(out) + H(+)(in). In terms of biological role, contributes to K(+)/H(+) antiport activity by supporting proton efflux to control proton extrusion and homeostasis in chloroplasts in a light-dependent manner to modulate photosynthesis. Prevents excessive induction of non-photochemical quenching (NPQ) under continuous-light conditions. Indirectly promotes efficient inorganic carbon uptake into chloroplasts. The chain is Potassium/proton antiporter CemA from Acorus calamus var. americanus (American sweet flag).